The sequence spans 496 residues: Probable E3 ubiquitin-protein ligase XBOS32 (496 aa).

ANK repeat units follow at residues 50–79, 83–112, 117–147, 180–209, and 223–252; these read GRNSPLHYAAAQGHHEIVSLLLESGVEINL, RGQTALMQACQYGHWEVVQTLMLFNANVHR, NGGSALHFAALHGHARCLRLVLADYVPSMPN, GGLTPLHMAALNGHVECVQLLLDLGASVIE, and AGSTPLHYAACGGNAVCCQLLIARGASLSA. The RING-type zinc-finger motif lies at 321-368; it reads CAVCLEGSCSVAAEGCKHEFCTRCALYLCSTSYTSVSPAGAIPCPLCR.

The enzyme catalyses S-ubiquitinyl-[E2 ubiquitin-conjugating enzyme]-L-cysteine + [acceptor protein]-L-lysine = [E2 ubiquitin-conjugating enzyme]-L-cysteine + N(6)-ubiquitinyl-[acceptor protein]-L-lysine.. It functions in the pathway protein modification; protein ubiquitination. This Oryza sativa subsp. japonica (Rice) protein is Probable E3 ubiquitin-protein ligase XBOS32 (XBOS32).